Consider the following 808-residue polypeptide: Glycerol-3-phosphate acyltransferase (808 aa).

The HXXXXD motif motif lies at 306–311 (HRSHMD).

This sequence belongs to the GPAT/DAPAT family.

The protein resides in the cell inner membrane. The enzyme catalyses sn-glycerol 3-phosphate + an acyl-CoA = a 1-acyl-sn-glycero-3-phosphate + CoA. It functions in the pathway phospholipid metabolism; CDP-diacylglycerol biosynthesis; CDP-diacylglycerol from sn-glycerol 3-phosphate: step 1/3. This is Glycerol-3-phosphate acyltransferase from Vibrio parahaemolyticus serotype O3:K6 (strain RIMD 2210633).